We begin with the raw amino-acid sequence, 129 residues long: MAGEFSRTSRIGDQLQKELASLIQFEVKDPRLGLVTVNEVRVAKDLGYADIYYTVLGKDDQPEVLAENQAALDSAKGFLRRRLAQEVKLRVMPHLRFHYDQSVVNGSRMSALIDEAIRDDETKNGNEDE.

This sequence belongs to the RbfA family. As to quaternary structure, monomer. Binds 30S ribosomal subunits, but not 50S ribosomal subunits or 70S ribosomes.

Its subcellular location is the cytoplasm. In terms of biological role, one of several proteins that assist in the late maturation steps of the functional core of the 30S ribosomal subunit. Associates with free 30S ribosomal subunits (but not with 30S subunits that are part of 70S ribosomes or polysomes). Required for efficient processing of 16S rRNA. May interact with the 5'-terminal helix region of 16S rRNA. The polypeptide is Ribosome-binding factor A (Marinomonas sp. (strain MWYL1)).